The sequence spans 202 residues: Small ribosomal subunit protein uS4c (202 aa).

An S4 RNA-binding domain is found at 90–153 (MRLDNIIFRL…KSQAIISKNI (64 aa)).

Belongs to the universal ribosomal protein uS4 family. Part of the 30S ribosomal subunit. Contacts protein S5. The interaction surface between S4 and S5 is involved in control of translational fidelity.

It localises to the plastid. Its subcellular location is the chloroplast. One of the primary rRNA binding proteins, it binds directly to 16S rRNA where it nucleates assembly of the body of the 30S subunit. In terms of biological role, with S5 and S12 plays an important role in translational accuracy. The chain is Small ribosomal subunit protein uS4c (rps4) from Splachnum sphaericum (Pinkstink dung moss).